We begin with the raw amino-acid sequence, 136 residues long: Urease subunit beta (136 aa).

Belongs to the urease beta subunit family. In terms of assembly, heterotrimer of UreA (gamma), UreB (beta) and UreC (alpha) subunits. Three heterotrimers associate to form the active enzyme.

Its subcellular location is the cytoplasm. It catalyses the reaction urea + 2 H2O + H(+) = hydrogencarbonate + 2 NH4(+). The protein operates within nitrogen metabolism; urea degradation; CO(2) and NH(3) from urea (urease route): step 1/1. This chain is Urease subunit beta, found in Staphylococcus aureus (strain Mu3 / ATCC 700698).